Here is a 334-residue protein sequence, read N- to C-terminus: Probable 2-ketogluconate reductase (334 aa).

NAD(+) contacts are provided by residues R164–I165, A244–R246, and D270. R246 is a catalytic residue. Residue E275 is part of the active site. Residue H294 is the Proton donor of the active site. Residue H294–T297 coordinates NAD(+).

Belongs to the D-isomer specific 2-hydroxyacid dehydrogenase family.

The protein resides in the cytoplasm. The enzyme catalyses D-gluconate + NADP(+) = 2-dehydro-D-gluconate + NADPH + H(+). Functionally, catalyzes the NADPH-dependent reduction of 2,5-diketo-D-gluconate (25DKG) to 5-keto-D-gluconate (5KDG), 2-keto-D-gluconate (2KDG) to D-gluconate, and 2-keto-L-gulonate (2KLG) to L-idonate (IA). The sequence is that of Probable 2-ketogluconate reductase (tkrA) from Dictyostelium discoideum (Social amoeba).